Consider the following 313-residue polypeptide: MVLSQKLHEAFKGTVERITGPRTISAFKEKGVLSVSEFVLAGDNLVSKCPTWSWESGDASKRKPYLPSDKQFLITRNVPCLRRAASVAEDYEAAGGEVLVDDEDNDGWLATHGKPKDKGKEEDNLPSMDALDINEKNTIQSIPTYFGGEEDDDIPDMEEFDEADNVVENDPATLQSTYLVAHEPDDDNILRTRTYDLSITYDKYYQTPRVWLTGYDESRMLLQPELVMEDVSQDHARKTVTIEDHPHLPGKHASVHPCRHGAVMKKIIDVLMSRGVEPEVDKYLFLFLKFMASVIPTIEYDYTMDFDLGSSST.

Positions 103 to 125 (EDNDGWLATHGKPKDKGKEEDNL) are disordered. The segment covering 114-123 (KPKDKGKEED) has biased composition (basic and acidic residues). Catalysis depends on cysteine 258, which acts as the Glycyl thioester intermediate.

It belongs to the ATG3 family. In terms of assembly, interacts with ATG8 through an intermediate thioester bond between Cys-258 and the C-terminal Gly of ATG8. Also interacts with the C-terminal region of the E1-like ATG7 enzyme.

It is found in the cytoplasm. Its function is as follows. E2 conjugating enzyme responsible for the E2-like covalent binding of phosphatidylethanolamine to the C-terminal Gly of ATG8. This step is required for the membrane association of ATG8. The formation of the ATG8-phosphatidylethanolamine conjugate is essential for autophagy and for the cytoplasm to vacuole transport (Cvt). In Arabidopsis thaliana (Mouse-ear cress), this protein is Autophagy-related protein 3 (ATG3).